A 516-amino-acid polypeptide reads, in one-letter code: Thioredoxin reductase 2, mitochondrial (516 aa).

Residue 62-79 coordinates FAD; the sequence is DYVKPTPVGTKWGIGGTC. A disulfide bond links Cys-79 and Cys-84. Residue His-489 is the Proton acceptor of the active site.

Belongs to the class-I pyridine nucleotide-disulfide oxidoreductase family. In terms of assembly, homodimer. FAD is required as a cofactor.

The protein resides in the mitochondrion. The catalysed reaction is [thioredoxin]-dithiol + NADP(+) = [thioredoxin]-disulfide + NADPH + H(+). In terms of biological role, thioredoxin system is a major player in glutathione metabolism, due to the demonstrated absence of a glutathione reductase. Functionally interacts with the Sod/Cat reactive oxidation species (ROS) defense system and thereby has a role in preadult development and life span. Lack of a glutathione reductase suggests antioxidant defense in Drosophila, and probably in related insects, differs fundamentally from that in other organisms. The chain is Thioredoxin reductase 2, mitochondrial from Drosophila melanogaster (Fruit fly).